A 161-amino-acid chain; its full sequence is MTNLCPCGTGKSFGECCEPLVTGARAALTAEELMRSRYTAYTRAEIGYIHDTTHPDHRADFDEKGTREWAESSQWEGLEILATAGGGPADTEGRVEFIARYRDTGGRRTHHELAEFRKVDDAWYFTDGYGIKPQPAVSTKIGRNDPCTCGSGKKYKKCCGA.

It belongs to the UPF0225 family.

The sequence is that of UPF0225 protein GSU1048 from Geobacter sulfurreducens (strain ATCC 51573 / DSM 12127 / PCA).